A 172-amino-acid polypeptide reads, in one-letter code: Ribosome maturation factor RimM (172 aa).

One can recognise a PRC barrel domain in the interval 96 to 168 (DGEFYYHEII…RVDVELLEGL (73 aa)).

The protein belongs to the RimM family. In terms of assembly, binds ribosomal protein uS19.

Its subcellular location is the cytoplasm. Its function is as follows. An accessory protein needed during the final step in the assembly of 30S ribosomal subunit, possibly for assembly of the head region. Essential for efficient processing of 16S rRNA. May be needed both before and after RbfA during the maturation of 16S rRNA. It has affinity for free ribosomal 30S subunits but not for 70S ribosomes. This chain is Ribosome maturation factor RimM, found in Streptococcus suis (strain 05ZYH33).